A 115-amino-acid polypeptide reads, in one-letter code: Histone H2A-Bbd type 1 (115 aa).

The interval 1–21 (MPRRRRRRGSSGAGGRGRTCS) is disordered. The docking domain stretch occupies residues 87–115 (LLDMVVHNDRLLSTLFNTTTISQVAPGED).

This sequence belongs to the histone H2A family. In terms of assembly, the nucleosome is a histone octamer containing two molecules each of H2A, H2B, H3 and H4 assembled in one H3-H4 heterotetramer and two H2A-H2B heterodimers. May be incorporated into a proportion of nucleosomes, replacing one or more H2A molecules. As to expression, present in mature sperm.

It localises to the nucleus. The protein localises to the chromosome. Atypical histone H2A which can replace conventional H2A in some nucleosomes and is associated with active transcription and mRNA processing. Nucleosomes wrap and compact DNA into chromatin, limiting DNA accessibility to the cellular machineries which require DNA as a template. Histones thereby play a central role in transcription regulation, DNA repair, DNA replication and chromosomal stability. Nucleosomes containing this histone are less rigid and organize less DNA than canonical nucleosomes in vivo. They are enriched in actively transcribed genes and associate with the elongating form of RNA polymerase. They associate with spliceosome components and are required for mRNA splicing. The chain is Histone H2A-Bbd type 1 from Homo sapiens (Human).